Reading from the N-terminus, the 251-residue chain is Fibroblast growth factor-binding protein 1 (251 aa).

A signal peptide spans 1 to 20 (MRLHSLILLSFLLLATQAFS). The tract at residues 25 to 62 (KRAKNAPHSTAEEGVEGSAPSLGKAQNKQRSRTSKSLT) is disordered. Disulfide bonds link Cys74–Cys91, Cys100–Cys133, and Cys109–Cys145. The disordered stretch occupies residues 160–189 (NARGNTKPRKEKAEVSAREHNKVQEAVSTE). Positions 170-182 (EKAEVSAREHNKV) are enriched in basic and acidic residues. An O-linked (GalNAc...) serine glycan is attached at Ser175. The sufficient for interaction with FGF2 and FGF2-induced effects stretch occupies residues 210–251 (RDPECLEDPDVLNQRKTALEFCGESWSSICTFFLNMLQATSC). 2 cysteine pairs are disulfide-bonded: Cys214/Cys251 and Cys231/Cys239.

This sequence belongs to the fibroblast growth factor-binding protein family. Found in a complex with FGFBP1, FGF1 and FGF2. Interacts with FGF1, FGF7, FGF10, FGF22 and HSPG2. Interacts with FGF2. As to expression, expressed in intestine, ovary, lung, placenta and normal and wounded skin.

It localises to the secreted. It is found in the extracellular space. Its subcellular location is the cell membrane. In terms of biological role, acts as a carrier protein that releases fibroblast-binding factors (FGFs) from the extracellular matrix (EM) storage and thus enhances the mitogenic activity of FGFs. Enhances FGF2 signaling during tissue repair, angiogenesis and in tumor growth. In Mus musculus (Mouse), this protein is Fibroblast growth factor-binding protein 1 (Fgfbp1).